Here is a 392-residue protein sequence, read N- to C-terminus: MYALRHLRLQSARHFRSSYAAAATTKHMLPRQPARVLIGDWSTWDKSRLQDVCSRSSSTATEPVKQQTPLQELVSAAKPYAQLMRIDRPIGTYLLFWPCAWSIALSADAGCWPDLTMLGLFGTGALIMRGAGCTINDLWDKDIDAKVERTRLRPLASGQISQFDAIVFLSAQLSLGLLVLVQLNWQSILLGASSLGLVITYPLMKRVTYWPQLVLGMAFNWGALLGWCATQGSVNLAACLPLYLSGVCWTIVYDTIYAHQDKLDDLQIGVKSTALRFGENTKVWLSGFTAAMLTGLSAAGWACDQTVPYYAAVGVVGAHLVQQIYSLNIDNPSDCAKKFISNHQVGLILFLGIVLGTLLKSDESKKQRQSSLTTSTASSYVPALPQKPEVLS.

Residues 1–22 constitute a mitochondrion transit peptide; sequence MYALRHLRLQSARHFRSSYAAA. Transmembrane regions (helical) follow at residues 90–110, 115–135, 163–183, 184–204, 207–227, 236–256, 283–303, 307–327, and 339–359; these read IGTY…ADAG, LTML…GCTI, FDAI…LVQL, NWQS…YPLM, VTYW…LLGW, LAAC…YDTI, VWLS…GWAC, VPYY…IYSL, and FISN…GTLL. The segment at 365–392 is disordered; that stretch reads KKQRQSSLTTSTASSYVPALPQKPEVLS. Over residues 369–379 the composition is skewed to polar residues; it reads QSSLTTSTASS.

It belongs to the UbiA prenyltransferase family. The cofactor is Mg(2+).

It is found in the mitochondrion inner membrane. The enzyme catalyses an all-trans-polyprenyl diphosphate + 4-hydroxybenzoate = a 4-hydroxy-3-(all-trans-polyprenyl)benzoate + diphosphate. It functions in the pathway cofactor biosynthesis; ubiquinone biosynthesis. Catalyzes the prenylation of para-hydroxybenzoate (PHB) with an all-trans polyprenyl group. Mediates the second step in the final reaction sequence of coenzyme Q (CoQ) biosynthesis, which is the condensation of the polyisoprenoid side chain with PHB, generating the first membrane-bound Q intermediate. This chain is 4-hydroxybenzoate polyprenyltransferase, mitochondrial, found in Drosophila melanogaster (Fruit fly).